The following is a 403-amino-acid chain: Myeloid cell surface antigen CD33 (403 aa).

The signal sequence occupies residues 1-16 (MLWPLPLFLLCAGSLA). The region spanning 17–120 (QDLEFQLVAP…DTGMYFFRVV (104 aa)) is the Ig-like V-type domain. Topologically, residues 18–240 (DLEFQLVAPE…VTRKSGQMRE (223 aa)) are extracellular. Intrachain disulfides connect Cys36–Cys169, Cys41–Cys100, and Cys163–Cys212. Asn110 carries N-linked (GlcNAc...) asparagine glycosylation. Residue Arg118 coordinates N-acetylneuraminate. The region spanning 145–228 (PDIIIPGTLE…AGVTVERTIQ (84 aa)) is the Ig-like C2-type domain. N-linked (GlcNAc...) asparagine glycosylation occurs at Asn160. N-linked (GlcNAc...) asparagine glycosylation is present at Asn230. Residues 241 to 267 (LVLVAVGEATVKLLILGLCLVFLIVMF) form a helical membrane-spanning segment. At 268 to 403 (CRRKTTKLSV…MLLCVSLTLS (136 aa)) the chain is on the cytoplasmic side.

The protein belongs to the immunoglobulin superfamily. SIGLEC (sialic acid binding Ig-like lectin) family. Homodimer; disulfide-linked. Interacts with PTPN6/SHP-1 and PTPN11/SHP-2 upon phosphorylation. Interacts with C1QA (via C-terminus); this interaction activates CD33 inhibitory motifs. In terms of processing, glycosylated. Post-translationally, phosphorylation is involved in binding to PTPN6 and PTPN11. In terms of tissue distribution, expressed on myeloid precursors in the bone marrow. In the peripheral blood, mostly expressed on granulocytes.

Its subcellular location is the cell membrane. In terms of biological role, sialic-acid-binding immunoglobulin-like lectin (Siglec) that plays a role in mediating cell-cell interactions and in maintaining immune cells in a resting state. Preferentially binds sialic acid to the short O-linked glycans of certain mucins. The chain is Myeloid cell surface antigen CD33 (Cd33) from Mus musculus (Mouse).